Consider the following 469-residue polypeptide: GDP-fucose protein O-fucosyltransferase 2 (469 aa).

The first 18 residues, 1–18 (MKFIIVLLLFFFFKVIDR), serve as a signal peptide directing secretion. GDP-beta-L-fucose is bound by residues 56–60 (GEGFN), 277–279 (HLR), and 373–374 (RF). The Proton acceptor role is filled by Glu57.

Belongs to the glycosyltransferase 68 family.

Its subcellular location is the endoplasmic reticulum. The enzyme catalyses L-seryl-[protein] + GDP-beta-L-fucose = 3-O-(alpha-L-fucosyl)-L-seryl-[protein] + GDP + H(+). It carries out the reaction L-threonyl-[protein] + GDP-beta-L-fucose = 3-O-(alpha-L-fucosyl)-L-threonyl-[protein] + GDP + H(+). It participates in protein modification; protein glycosylation. Catalyzes the reaction that attaches fucose through an O-glycosidic linkage to a conserved serine or threonine residue in the consensus sequence C1-X-X-S/T-C2 of thrombospondin type I repeats (TSRs) where C1 and C2 are the first and second cysteines of the repeat, respectively. O-fucosylates sporozoite proteins CSP and TRAP. O-fucosylation regulates stability and intracellular trafficking of TRAP but not of CSP. Probably by regulating protein O-fucosylation, may play a role in parasite transmission to the mosquito vector and/or infection of the vertebrate host hepatocytes; however, POFUT2 involvement in transmission/infection is controversial. The polypeptide is GDP-fucose protein O-fucosyltransferase 2 (Plasmodium falciparum (isolate NF54)).